We begin with the raw amino-acid sequence, 886 residues long: Extended synaptotagmin-3 (886 aa).

Residues 1–21 (MRAEEPCAPGAPSALGAQRTP) form a disordered region. Residues 1 to 29 (MRAEEPCAPGAPSALGAQRTPGPELRLSS) lie on the Cytoplasmic side of the membrane. The next 2 membrane-spanning stretches (helical) occupy residues 30-50 (QLLP…GPVY) and 51-71 (LAGY…LWMW). Residues 72 to 886 (WRRNRRGKLG…ELTPNGQPRS (815 aa)) lie on the Cytoplasmic side of the membrane. The SMP-LTD domain maps to 114–291 (DVERVEWANK…LPNRVTVPVK (178 aa)). 2 consecutive C2 domains span residues 291–408 (KKGL…DEWF) and 426–566 (SLLT…QLDH). Ca(2+) contacts are provided by Lys-321, Asp-322, Asp-332, Asp-379, Glu-380, Asp-381, Asp-383, Asp-385, and Asp-386. The interval 613 to 673 (QGPKAQPQEE…PEPKGKDSAK (61 aa)) is disordered. Residues 642 to 659 (RSTTTTTSATTVATEPTS) are compositionally biased toward low complexity. Over residues 664–673 (PEPKGKDSAK) the composition is skewed to basic and acidic residues. The 123-residue stretch at 754 to 876 (QLGEIQLTVR…DLIKGFSQWY (123 aa)) folds into the C2 3 domain. The required for phosphatidylinositol 4,5-bisphosphate-dependent location at the cell membrane stretch occupies residues 801 to 808 (RKWACRKK).

It belongs to the extended synaptotagmin family. Interacts with ESYT1 and ESYT2. Widely expressed with high level in cerebellum and skin.

The protein localises to the cell membrane. The protein resides in the endoplasmic reticulum membrane. Binds glycerophospholipids in a barrel-like domain and may play a role in cellular lipid transport. Tethers the endoplasmic reticulum to the cell membrane and promotes the formation of appositions between the endoplasmic reticulum and the cell membrane. The polypeptide is Extended synaptotagmin-3 (Homo sapiens (Human)).